The following is a 320-amino-acid chain: GTP 3',8-cyclase (320 aa).

The 221-residue stretch at 5 to 225 folds into the Radical SAM core domain; sequence QFGRKINYLR…IQLIKKDEKA (221 aa). A GTP-binding site is contributed by R14. Residues C21 and C25 each coordinate [4Fe-4S] cluster. Residue Y27 participates in S-adenosyl-L-methionine binding. A [4Fe-4S] cluster-binding site is contributed by C28. R64 contributes to the GTP binding site. Residue G68 participates in S-adenosyl-L-methionine binding. T95 contributes to the GTP binding site. Residue S119 participates in S-adenosyl-L-methionine binding. A GTP-binding site is contributed by K155. M189 contacts S-adenosyl-L-methionine. C248 and C251 together coordinate [4Fe-4S] cluster. 253–255 contributes to the GTP binding site; sequence RIR. Residue C265 participates in [4Fe-4S] cluster binding.

It belongs to the radical SAM superfamily. MoaA family. As to quaternary structure, monomer and homodimer. [4Fe-4S] cluster serves as cofactor.

The enzyme catalyses GTP + AH2 + S-adenosyl-L-methionine = (8S)-3',8-cyclo-7,8-dihydroguanosine 5'-triphosphate + 5'-deoxyadenosine + L-methionine + A + H(+). It functions in the pathway cofactor biosynthesis; molybdopterin biosynthesis. Its function is as follows. Catalyzes the cyclization of GTP to (8S)-3',8-cyclo-7,8-dihydroguanosine 5'-triphosphate. The protein is GTP 3',8-cyclase of Campylobacter jejuni (strain RM1221).